The sequence spans 493 residues: 11S globulin seed storage protein G3 (493 aa).

Positions 1–20 are cleaved as a signal peptide; sequence MASKATLLLAFTLLFATCIA. Intrachain disulfides connect Cys32-Cys65 and Cys103-Cys312. The region spanning 37-248 is the Cupin type-1 1 domain; that stretch reads IEALEPIEVI…SFNVDQETAQ (212 aa). Disordered regions lie at residues 190–229 and 269–305; these read PQAQ…NIFN and IVRP…GWSN. Composition is skewed to low complexity over residues 191–221 and 280–298; these read QAQA…QGQG and RQQQ…QQQG. A Cupin type-1 2 domain is found at 318 to 467; sequence VNIDNPSQAD…RYQLSREEAQ (150 aa).

The protein belongs to the 11S seed storage protein (globulins) family. Hexamer; each subunit is composed of an acidic and a basic chain derived from a single precursor and linked by a disulfide bond.

Its function is as follows. This is a seed storage protein. The polypeptide is 11S globulin seed storage protein G3 (HAG3) (Helianthus annuus (Common sunflower)).